Here is a 428-residue protein sequence, read N- to C-terminus: uncharacterized protein (428 aa).

The Glutaredoxin domain maps to 241-351 (KEEEEQSVGK…KLLGGCERVE (111 aa)). Residues 386–401 (EDDDDDDDEGDDDESV) are compositionally biased toward acidic residues. A disordered region spans residues 386–405 (EDDDDDDDEGDDDESVKEER).

This is an uncharacterized protein from Arabidopsis thaliana (Mouse-ear cress).